The following is a 407-amino-acid chain: Phosphopentomutase (407 aa).

Residues Asp10, Asp306, His311, Asp347, His348, and His359 each coordinate Mn(2+).

This sequence belongs to the phosphopentomutase family. Mn(2+) is required as a cofactor.

The protein localises to the cytoplasm. It catalyses the reaction 2-deoxy-alpha-D-ribose 1-phosphate = 2-deoxy-D-ribose 5-phosphate. The catalysed reaction is alpha-D-ribose 1-phosphate = D-ribose 5-phosphate. It participates in carbohydrate degradation; 2-deoxy-D-ribose 1-phosphate degradation; D-glyceraldehyde 3-phosphate and acetaldehyde from 2-deoxy-alpha-D-ribose 1-phosphate: step 1/2. Its function is as follows. Isomerase that catalyzes the conversion of deoxy-ribose 1-phosphate (dRib-1-P) and ribose 1-phosphate (Rib-1-P) to deoxy-ribose 5-phosphate (dRib-5-P) and ribose 5-phosphate (Rib-5-P), respectively. The chain is Phosphopentomutase from Yersinia pestis bv. Antiqua (strain Antiqua).